Here is a 462-residue protein sequence, read N- to C-terminus: Argininosuccinate lyase (462 aa).

It belongs to the lyase 1 family. Argininosuccinate lyase subfamily.

The protein resides in the cytoplasm. The enzyme catalyses 2-(N(omega)-L-arginino)succinate = fumarate + L-arginine. It participates in amino-acid biosynthesis; L-arginine biosynthesis; L-arginine from L-ornithine and carbamoyl phosphate: step 3/3. The chain is Argininosuccinate lyase from Prochlorococcus marinus (strain SARG / CCMP1375 / SS120).